Consider the following 801-residue polypeptide: Phenylalanine--tRNA ligase beta subunit (801 aa).

The 115-residue stretch at 39–153 folds into the tRNA-binding domain; that stretch reads AEGLSKLVVG…EGAIPGDSIF (115 aa). In terms of domain architecture, B5 spans 406-481; the sequence is TEPVEVSTTL…RIYGYEKLPT (76 aa). D459, D465, E468, and E469 together coordinate Mg(2+). In terms of domain architecture, FDX-ACB spans 708–801; it reads TKYPSVSRDI…LVEKVNAEIR (94 aa).

It belongs to the phenylalanyl-tRNA synthetase beta subunit family. Type 1 subfamily. Tetramer of two alpha and two beta subunits. Requires Mg(2+) as cofactor.

The protein localises to the cytoplasm. It carries out the reaction tRNA(Phe) + L-phenylalanine + ATP = L-phenylalanyl-tRNA(Phe) + AMP + diphosphate + H(+). The protein is Phenylalanine--tRNA ligase beta subunit of Streptococcus agalactiae serotype V (strain ATCC BAA-611 / 2603 V/R).